Here is an 81-residue protein sequence, read N- to C-terminus: Small ribosomal subunit protein bS16 (81 aa).

This sequence belongs to the bacterial ribosomal protein bS16 family.

This is Small ribosomal subunit protein bS16 from Neisseria gonorrhoeae (strain ATCC 700825 / FA 1090).